A 293-amino-acid polypeptide reads, in one-letter code: ELMO domain-containing protein 2 (293 aa).

Residues 126-282 enclose the ELMO domain; it reads QHEKLLIKLW…KFHEKIKGLL (157 aa).

Functionally, acts as a GTPase-activating protein (GAP) toward guanine nucleotide exchange factors like ARL2, ARL3, ARF1 and ARF6, but not for GTPases outside the Arf family. This Bos taurus (Bovine) protein is ELMO domain-containing protein 2 (ELMOD2).